Reading from the N-terminus, the 453-residue chain is Aspartic proteinase PCS1 (453 aa).

Residues 1 to 18 form the signal peptide; it reads MFSRFHALFLLLVLSVRT. A propeptide spans 19 to 57 (activation peptide); it reads YKCVSSSSSSSSSFSFSSFSSSSSSQTLVLPLKTRITPT. Residues Asn-70 and Asn-85 are each glycosylated (N-linked (GlcNAc...) asparagine). Residues 73–438 enclose the Peptidase A1 domain; sequence LTVTLTVGTP…DLQRSRIGLA (366 aa). Residue Asp-91 is part of the active site. 4 N-linked (GlcNAc...) asparagine glycosylation sites follow: Asn-102, Asn-175, Asn-178, and Asn-243. Asp-304 is an active-site residue. Asn-326 and Asn-395 each carry an N-linked (GlcNAc...) asparagine glycan.

It belongs to the peptidase A1 family. Expressed specifically in developing gametophytes and developing seeds.

It localises to the endoplasmic reticulum. Its function is as follows. Embryo-specific aspartic protease that limits programmed cell death during reproductive development. Possesses peptidase activity toward casein in vitro. This is Aspartic proteinase PCS1 (PCS1) from Arabidopsis thaliana (Mouse-ear cress).